Reading from the N-terminus, the 166-residue chain is Phosphopantetheine adenylyltransferase (166 aa).

Position 11 (Ser11) interacts with substrate. Residues Ser11–Phe12 and His19 each bind ATP. 3 residues coordinate substrate: Lys43, Ala76, and Arg90. ATP is bound by residues Gly91–Arg93, Glu101, and Leu126–Ser132.

This sequence belongs to the bacterial CoaD family. In terms of assembly, homohexamer. Mg(2+) is required as a cofactor.

Its subcellular location is the cytoplasm. The catalysed reaction is (R)-4'-phosphopantetheine + ATP + H(+) = 3'-dephospho-CoA + diphosphate. It functions in the pathway cofactor biosynthesis; coenzyme A biosynthesis; CoA from (R)-pantothenate: step 4/5. Reversibly transfers an adenylyl group from ATP to 4'-phosphopantetheine, yielding dephospho-CoA (dPCoA) and pyrophosphate. In Streptococcus equi subsp. zooepidemicus (strain H70), this protein is Phosphopantetheine adenylyltransferase.